We begin with the raw amino-acid sequence, 122 residues long: Large ribosomal subunit protein uL14 (122 aa).

This sequence belongs to the universal ribosomal protein uL14 family. Part of the 50S ribosomal subunit. Forms a cluster with proteins L3 and L19. In the 70S ribosome, L14 and L19 interact and together make contacts with the 16S rRNA in bridges B5 and B8.

In terms of biological role, binds to 23S rRNA. Forms part of two intersubunit bridges in the 70S ribosome. In Lacticaseibacillus casei (strain BL23) (Lactobacillus casei), this protein is Large ribosomal subunit protein uL14.